The sequence spans 2171 residues: DExH-box ATP-dependent RNA helicase DExH12 (2171 aa).

3 disordered regions span residues 24–80, 218–267, and 383–426; these read SLVL…KERD, EENE…NEGT, and TAKE…ESGW. Composition is skewed to basic and acidic residues over residues 31–40 and 50–80; these read NRPRDTHEPT and IDPR…KERD. A compositionally biased stretch (acidic residues) spans 218-242; that stretch reads EENEEDDEESDPDMVEEDDDEEDDE. Basic and acidic residues predominate over residues 383–423; sequence TAKEREENLQKSINEEARRLKDETGGDGGRGRRDVADRDSE. A Helicase ATP-binding 1 domain is found at 514–697; it reads DTALFKAENI…FLRVDLKKGL (184 aa). 527–534 provides a ligand contact to ATP; the sequence is APTGAGKT. Positions 639-642 match the DEIH box motif; sequence DEIH. Positions 731–941 constitute a Helicase C-terminal 1 domain; that stretch reads LCYQKVLAGA…GTVQNAREAC (211 aa). Residues 1006–1308 enclose the SEC63 1 domain; it reads TDLGRIASYY…WLGSETVLPV (303 aa). Residues 1360–1537 enclose the Helicase ATP-binding 2 domain; the sequence is TVLYNTNDNV…WIGASSHGLF (178 aa). 1373–1380 is an ATP binding site; that stretch reads APTGSGKT. Residues 1479-1482 carry the DELH box motif; the sequence is DELH. One can recognise a Helicase C-terminal 2 domain in the interval 1574-1779; sequence AIVQHAKNKK…GVIENKQDAV (206 aa). Residues 1839–2157 enclose the SEC63 2 domain; it reads PLNLGMIASY…LGCDQEYSFS (319 aa).

This sequence belongs to the DExH box helicase family. Interacts with CLO.

It is found in the nucleus. It carries out the reaction ATP + H2O = ADP + phosphate + H(+). RNA helicase that plays an essential role in pre-mRNA splicing as component of the U5 snRNP and U4/U6-U5 tri-snRNP complexes. Involved in spliceosome assembly, activation and disassembly. The chain is DExH-box ATP-dependent RNA helicase DExH12 from Arabidopsis thaliana (Mouse-ear cress).